The following is a 130-amino-acid chain: Small ribosomal subunit protein uS9 (130 aa).

It belongs to the universal ribosomal protein uS9 family.

The polypeptide is Small ribosomal subunit protein uS9 (Paraburkholderia phymatum (strain DSM 17167 / CIP 108236 / LMG 21445 / STM815) (Burkholderia phymatum)).